The following is a 456-amino-acid chain: 26S proteasome non-ATPase regulatory subunit 12 (456 aa).

Residue Ala-2 is modified to N-acetylalanine. Residue Lys-92 forms a Glycyl lysine isopeptide (Lys-Gly) (interchain with G-Cter in SUMO1); alternate linkage. A Glycyl lysine isopeptide (Lys-Gly) (interchain with G-Cter in SUMO2); alternate cross-link involves residue Lys-92. Residues Lys-221 and Lys-368 each carry the N6-acetyllysine modification. In terms of domain architecture, PCI spans 242-420 (SICKHYRAIY…GIINFQRPKD (179 aa)).

This sequence belongs to the proteasome subunit p55 family. As to quaternary structure, component of the 19S proteasome regulatory particle complex. The 26S proteasome consists of a 20S core particle (CP) and two 19S regulatory subunits (RP). The regulatory particle is made of a lid composed of 9 subunits including PSMD12, a base containing 6 ATPases and few additional components. Interacts with ERCC6.

In terms of biological role, component of the 26S proteasome, a multiprotein complex involved in the ATP-dependent degradation of ubiquitinated proteins. This complex plays a key role in the maintenance of protein homeostasis by removing misfolded or damaged proteins, which could impair cellular functions, and by removing proteins whose functions are no longer required. Therefore, the proteasome participates in numerous cellular processes, including cell cycle progression, apoptosis, or DNA damage repair. This chain is 26S proteasome non-ATPase regulatory subunit 12 (PSMD12), found in Homo sapiens (Human).